We begin with the raw amino-acid sequence, 149 residues long: Calmodulin (149 aa).

N-acetylalanine is present on Ala2. EF-hand domains are found at residues 8-43, 44-79, 81-116, and 117-149; these read DQIS…LGQN, PTEA…KMKD, DSEE…LGEK, and LTDE…MMAK. Ca(2+) is bound by residues Asp21, Asp23, Asp25, Cys27, Glu32, Asp57, Asp59, Asn61, Thr63, Glu68, Asp94, Asp96, Asn98, and Glu105. An N6,N6,N6-trimethyllysine modification is found at Lys116. Ca(2+) contacts are provided by Asp130, Asp132, Asp134, Gln136, and Glu141.

Belongs to the calmodulin family.

Functionally, calmodulin mediates the control of a large number of enzymes, ion channels and other proteins by Ca(2+). Among the enzymes to be stimulated by the calmodulin-Ca(2+) complex are a number of protein kinases and phosphatases. The chain is Calmodulin (CCM1) from Capsicum annuum (Capsicum pepper).